We begin with the raw amino-acid sequence, 117 residues long: Large ribosomal subunit protein bL20 (117 aa).

The protein belongs to the bacterial ribosomal protein bL20 family.

Functionally, binds directly to 23S ribosomal RNA and is necessary for the in vitro assembly process of the 50S ribosomal subunit. It is not involved in the protein synthesizing functions of that subunit. The protein is Large ribosomal subunit protein bL20 of Mycoplasma mobile (strain ATCC 43663 / 163K / NCTC 11711) (Mesomycoplasma mobile).